Here is a 244-residue protein sequence, read N- to C-terminus: Heat shock transcription factor (244 aa).

Residues 13 to 108 (IPKFIMKLYK…LLGFDDSLRM (96 aa)) mediate DNA binding. Residues 123–168 (DGSLKEIVEYLYVQNQELYTELSVCKERIERQERALNGLIEILSRV) form an involved in trimerization region. The tract at residues 204–244 (EGCEPASPPLQDKGIPELSFKPGGIPHADSDTKDDNYDPFF) is disordered. Positions 231 to 244 (ADSDTKDDNYDPFF) are enriched in basic and acidic residues.

Belongs to the HSF family. As to quaternary structure, homotrimer. Homotrimerization increases the affinity of HSF1 to DNA.

It is found in the nucleus. DNA-binding transcription factor that specifically binds heat shock promoter elements (HSE) and activates transcription. The protein is Heat shock transcription factor of Encephalitozoon cuniculi (strain GB-M1) (Microsporidian parasite).